The following is a 40-amino-acid chain: Photosystem II reaction center protein Y (40 aa).

Residues 5-23 (LVLVASPILLALGWAGFNI) form a helical membrane-spanning segment.

This sequence belongs to the PsbY family. In terms of assembly, PSII is composed of 1 copy each of membrane proteins PsbA, PsbB, PsbC, PsbD, PsbE, PsbF, PsbH, PsbI, PsbJ, PsbK, PsbL, PsbM, PsbT, PsbX, PsbY, PsbZ, Psb30/Ycf12, peripheral proteins PsbO, CyanoQ (PsbQ), PsbU, PsbV and a large number of cofactors. It forms dimeric complexes.

It localises to the cellular thylakoid membrane. Its function is as follows. Loosely associated component of the core of photosystem II (PSII), it is not always seen in crystals. PSII is a light-driven water plastoquinone oxidoreductase, using light energy to abstract electrons from H(2)O, generating a proton gradient subsequently used for ATP formation. The sequence is that of Photosystem II reaction center protein Y from Synechococcus sp. (strain WH7803).